A 430-amino-acid polypeptide reads, in one-letter code: Forkhead box protein N2 (430 aa).

The disordered stretch occupies residues 1-47 (MGPATGMTPDKNIESPTAEKVPGLSQTENMGSLPEEVGAARPKASMV). Positions 108–204 (KPPYSFSLLI…QALKKQPFSS (97 aa)) form a DNA-binding region, fork-head. Disordered stretches follow at residues 299–326 (NIDPKEDHNYSASGGDSQRCESRSSVSS) and 338–391 (PKNS…EASQ). Acidic residues predominate over residues 355–366 (DDTDIDYEEDTL). The segment covering 381–390 (HGSKLRKEAS) has biased composition (basic and acidic residues).

As to expression, expressed in the developing eye from stage 23. Localized to the prospective retinal layer and a layer of cells lateral to the ventricular zone. At stage 29, expression extends to the branchial arches and the brain. At stage 33/34, expressed in the vagal ganglion. At stage 36, expression in the retina decreases. Not expressed in the eye lens.

The protein localises to the nucleus. This Xenopus laevis (African clawed frog) protein is Forkhead box protein N2.